Reading from the N-terminus, the 398-residue chain is Rhizopuspepsin-4 (398 aa).

Residues 1–21 (MKFTLISSCVALACMALAVEA) form the signal peptide. A propeptide spans 22 to 74 (APSGKKINVPLSKNANYKPNAKRAIEKANAKYARFRSSSSSSSSSSCGSAGTE) (activation peptide). Low complexity predominate over residues 58 to 78 (SSSSSSSSSSCGSAGTESSGS). The tract at residues 58-83 (SSSSSSSSSSCGSAGTESSGSVPVTD) is disordered. The region spanning 90–394 (YYGEVTVGTP…NPQVPQVQIA (305 aa)) is the Peptidase A1 domain. Residue Asp108 is part of the active site. Residues Cys121 and Cys124 are joined by a disulfide bond. Asp291 is a catalytic residue. Cys325 and Cys358 are disulfide-bonded.

It belongs to the peptidase A1 family.

The catalysed reaction is Hydrolysis of proteins with broad specificity similar to that of pepsin A, preferring hydrophobic residues at P1 and P1'. Clots milk and activates trypsinogen. Does not cleave 4-Gln-|-His-5, but does cleave 10-His-|-Leu-11 and 12-Val-|-Glu-13 in B chain of insulin.. The polypeptide is Rhizopuspepsin-4 (Rhizopus niveus).